The chain runs to 519 residues: Bifunctional purine biosynthesis protein PurH (519 aa).

The 145-residue stretch at 1–145 (MQPIQRALIS…KNHASVTVVV (145 aa)) folds into the MGS-like domain.

Belongs to the PurH family.

The enzyme catalyses (6R)-10-formyltetrahydrofolate + 5-amino-1-(5-phospho-beta-D-ribosyl)imidazole-4-carboxamide = 5-formamido-1-(5-phospho-D-ribosyl)imidazole-4-carboxamide + (6S)-5,6,7,8-tetrahydrofolate. It catalyses the reaction IMP + H2O = 5-formamido-1-(5-phospho-D-ribosyl)imidazole-4-carboxamide. The protein operates within purine metabolism; IMP biosynthesis via de novo pathway; 5-formamido-1-(5-phospho-D-ribosyl)imidazole-4-carboxamide from 5-amino-1-(5-phospho-D-ribosyl)imidazole-4-carboxamide (10-formyl THF route): step 1/1. It participates in purine metabolism; IMP biosynthesis via de novo pathway; IMP from 5-formamido-1-(5-phospho-D-ribosyl)imidazole-4-carboxamide: step 1/1. The polypeptide is Bifunctional purine biosynthesis protein PurH (Allochromatium vinosum (strain ATCC 17899 / DSM 180 / NBRC 103801 / NCIMB 10441 / D) (Chromatium vinosum)).